Here is a 326-residue protein sequence, read N- to C-terminus: Cyclin-dependent kinase B2-1 (326 aa).

Positions 28-318 (YEKLEKVGEG…AKKAMEHPYF (291 aa)) constitute a Protein kinase domain. Residues 34–42 (VGEGTYGKV) and Lys-57 contribute to the ATP site. Thr-38 carries the phosphothreonine modification. Tyr-39 carries the phosphotyrosine modification. The active-site Proton acceptor is Asp-159. A Phosphothreonine modification is found at Thr-193.

This sequence belongs to the protein kinase superfamily. CMGC Ser/Thr protein kinase family. CDC2/CDKX subfamily. In terms of assembly, interacts with CYCB2-1 and CYCB2-2. Binding to CYCB2-1 or CYCB2-2 activates CDK kinase. As to expression, expressed in the dividing region of the root apex and the intercalary meristem of internodes.

The protein resides in the nucleus. The protein localises to the cytoplasm. It localises to the cytoskeleton. It is found in the spindle. Its subcellular location is the phragmoplast. The catalysed reaction is L-seryl-[protein] + ATP = O-phospho-L-seryl-[protein] + ADP + H(+). The enzyme catalyses L-threonyl-[protein] + ATP = O-phospho-L-threonyl-[protein] + ADP + H(+). It carries out the reaction [DNA-directed RNA polymerase] + ATP = phospho-[DNA-directed RNA polymerase] + ADP + H(+). In terms of biological role, forms a complex with CYCB2-1 or CYCB2-2 that activates CDK kinase in tobacco BY2 cells during G2/M (mitosis) phases. May be involved in the regulation of the cell cycle at the G2/M transition. The protein is Cyclin-dependent kinase B2-1 (CDKB2-1) of Oryza sativa subsp. japonica (Rice).